A 230-amino-acid polypeptide reads, in one-letter code: Dephospho-CoA kinase (230 aa).

The tract at residues 1–20 (MSKYAAIPSPYSHQPQAPDH) is disordered. One can recognise a DPCK domain in the interval 26 to 225 (VVGLTGGIGS…QDYLKLAQQL (200 aa)). Residue 34–39 (GSGKSA) coordinates ATP.

This sequence belongs to the CoaE family.

It is found in the cytoplasm. The enzyme catalyses 3'-dephospho-CoA + ATP = ADP + CoA + H(+). It functions in the pathway cofactor biosynthesis; coenzyme A biosynthesis; CoA from (R)-pantothenate: step 5/5. Its function is as follows. Catalyzes the phosphorylation of the 3'-hydroxyl group of dephosphocoenzyme A to form coenzyme A. This chain is Dephospho-CoA kinase, found in Psychrobacter arcticus (strain DSM 17307 / VKM B-2377 / 273-4).